The following is a 270-amino-acid chain: Gap junction beta-3 protein (270 aa).

Over 1-20 (MDWKKLQDLLSGVNQYSTAF) the chain is Cytoplasmic. Residues 21–40 (GRIWLSVVFVFRVLVYVVAA) traverse the membrane as a helical segment. Residues 41–75 (ERVWGDEQKDFDCNTRQPGCTNVCYDNFFPISNIR) are Extracellular-facing. Residues 76 to 98 (LWALQLIFVTCPSMLVILHVAYR) traverse the membrane as a helical segment. The Cytoplasmic portion of the chain corresponds to 99–126 (EERERKHRQKHGEHCAKLYSHPGKKHGG). A helical transmembrane segment spans residues 127–149 (LWWTYLFSLIFKLIIELVFLYVL). Over 150 to 188 (HTLWHGFTMPRLVQCASVVPCPNTVDCYIARPTEKKVFT) the chain is Extracellular. A helical membrane pass occupies residues 189 to 211 (YFMVGASAVCIILTICEICYLIF). Residues 212–270 (HRIMRGLSKDKSTKSISSPKSSSRASTCRCHHKLLESGDLEAVPADDKLQASAPSLTPI) lie on the Cytoplasmic side of the membrane.

This sequence belongs to the connexin family. Beta-type (group I) subfamily. As to quaternary structure, a connexon is composed of a hexamer of connexins. Interacts with CNST.

Its subcellular location is the cell membrane. It localises to the cell junction. The protein resides in the gap junction. Functionally, one gap junction consists of a cluster of closely packed pairs of transmembrane channels, the connexons, through which materials of low MW diffuse from one cell to a neighboring cell. The protein is Gap junction beta-3 protein (Gjb3) of Rattus norvegicus (Rat).